Reading from the N-terminus, the 167-residue chain is MNTKITNFSFDKKNLSLAEDIIKKYPPEGKRSAILPLLDLAQRQNGGWLPVPAIEYVANMLEMPYMRAYEVATFYTMFNLKPVGKNHIQVCTTTPCWLRGSDDIMKTCKEKLGIKDEEVTKDQKFSLIEIECLGACVNAPVVQINDDYYEDLTPEKMEAIIDKLRND.

Cysteine 91, cysteine 96, cysteine 132, and cysteine 136 together coordinate [2Fe-2S] cluster.

It belongs to the complex I 24 kDa subunit family. Requires [2Fe-2S] cluster as cofactor.

It catalyses the reaction a quinone + NADH + 5 H(+)(in) = a quinol + NAD(+) + 4 H(+)(out). Its function is as follows. NDH-1 shuttles electrons from NADH, via FMN and iron-sulfur (Fe-S) centers, to quinones in the respiratory chain. Couples the redox reaction to proton translocation (for every two electrons transferred, four hydrogen ions are translocated across the cytoplasmic membrane), and thus conserves the redox energy in a proton gradient. The sequence is that of NADH-quinone oxidoreductase subunit E (nuoE) from Rickettsia bellii (strain RML369-C).